A 461-amino-acid polypeptide reads, in one-letter code: Phosphatidate cytidylyltransferase 1 (461 aa).

Residues 1–68 (MLELRHRGGC…PEVPPSSDRT (68 aa)) form a disordered region. The residue at position 7 (Arg-7) is an Omega-N-methylarginine. A compositionally biased stretch (basic and acidic residues) spans 22–56 (REGEAAGGDHETESTSDKETDIDDRYGDLDARGDS). Residues Ser-35 and Ser-37 each carry the phosphoserine modification. A run of 6 helical transmembrane segments spans residues 96 to 116 (MISLFFLIIYMGSFMLMLLVL), 149 to 169 (FLLCVNYFFYGETVADYFATF), 183 to 203 (HRFISFALYLAGFCMFVLSLV), 230 to 250 (LVIQNLFEGMIWFLVPISSVI), 279 to 299 (GFIGGFFSTVIFGFIAAYVLS), and 357 to 377 (IALSTFASLIGPFGGFFASGF).

It belongs to the CDS family. In terms of assembly, homodimer. Interacts with FOS; this interaction may enhance catalytic activity. Mg(2+) is required as a cofactor. In terms of tissue distribution, brain, retina and testis. Found in cerebellar Purkinje cells, pineal body, inner segment of photoreceptor cells and postmitotic spermatocytes and spermatids.

Its subcellular location is the endoplasmic reticulum membrane. It carries out the reaction a 1,2-diacyl-sn-glycero-3-phosphate + CTP + H(+) = a CDP-1,2-diacyl-sn-glycerol + diphosphate. It catalyses the reaction 1-octadecanoyl-2-(5Z,8Z,11Z,14Z-eicosatetraenoyl)-sn-glycero-3-phosphate + CTP + H(+) = 1-octadecanoyl-2-(5Z,8Z,11Z,14Z-eicosatetraenoyl)-sn-glycero-3-cytidine-5'-diphosphate + diphosphate. The enzyme catalyses 1-octadecanoyl-2-(9Z,12Z-octadecadienoyl)-sn-glycero-3-phosphate + CTP + H(+) = 1-octadecanoyl-2-(9Z,12Z-octadecadienoyl)-sn-glycero-3-cytidine-5'-diphosphate + diphosphate. The catalysed reaction is 1-hexadecanoyl-2-(5Z,8Z,11Z,14Z-eicosatetraenoyl)-sn-glycero-3-phosphate + CTP + H(+) = 1-hexadecanoyl-2-(5Z,8Z,11Z,14Z-eicosatetraenoyl)-sn-glycero-3-cytidine-5'-diphosphate + diphosphate. It carries out the reaction 1,2-di-(5Z,8Z,11Z,14Z)-eicosatetraenoyl-sn-glycero-3-phosphate + CTP + H(+) = 1,2-di-(5Z,8Z,11Z,14Z-eicosatetraenoyl)-sn-glycero-3-cytidine-5'-diphosphate + diphosphate. It catalyses the reaction 1-octadecanoyl-2-(9Z-octadecenoyl)-sn-glycero-3-phosphate + CTP + H(+) = 1-octadecanoyl-2-(9Z-octadecenoyl)-sn-glycero-3-cytidine-5'-diphosphate + diphosphate. The enzyme catalyses 1-octadecanoyl-2-(4Z,7Z,10Z,13Z,16Z,19Z-docosahexaenoyl)-sn-glycero-3-phosphate + CTP + H(+) = 1-octadecanoyl-2-(4Z,7Z,10Z,13Z,16Z,19Z-docosahexaenoyl)-sn-glycero-3-cytidine-5'-diphosphate + diphosphate. The catalysed reaction is 1,2-di-(9Z,12Z-octadecadienoyl)-sn-glycero-3-phosphate + CTP + H(+) = 1,2-di-(9Z,12Z-octadecadienoyl)-sn-glycero-3-cytidine-5'-diphosphate + diphosphate. It carries out the reaction 1,2-di-(9Z-octadecenoyl)-sn-glycero-3-phosphate + CTP + H(+) = 1,2-di-(9Z-octadecenoyl)-sn-glycero-3-cytidine-5'-diphosphate + diphosphate. The protein operates within phospholipid metabolism; CDP-diacylglycerol biosynthesis; CDP-diacylglycerol from sn-glycerol 3-phosphate: step 3/3. Activated by GTP. Inhibited by CDP-diacylglycerol and by phosphatidylglycerol 4,5-bisphosphate (PPI2). In terms of biological role, catalyzes the conversion of phosphatidic acid (PA) to CDP-diacylglycerol (CDP-DAG), an essential intermediate in the synthesis of phosphatidylglycerol, cardiolipin and phosphatidylinositol. Exhibits almost no acyl chain preference for PA, showing no discrimination for the sn-1/sn-2 acyl chain composition of PAs. Plays an important role in regulatinng the growth of lipid droplets which are storage organelles at the center of lipid and energy homeostasis. Positively regulates the differentiation and development of adipocytes. This chain is Phosphatidate cytidylyltransferase 1, found in Rattus norvegicus (Rat).